The primary structure comprises 76 residues: Tautomerase PptA (76 aa).

The active-site Proton acceptor; via imino nitrogen is the Pro2.

It belongs to the 4-oxalocrotonate tautomerase family. PptA subfamily. Homodimer.

Its subcellular location is the cytoplasm. The polypeptide is Tautomerase PptA (Pectobacterium carotovorum subsp. carotovorum (strain PC1)).